The primary structure comprises 79 residues: Sec-independent protein translocase protein TatA (79 aa).

A helical transmembrane segment spans residues 1–21; it reads MGFSTTHLLIFLVIIIVIFGT. The disordered stretch occupies residues 43 to 63; sequence KEGSDKAADAPAAAPQQVASS. Positions 51-63 are enriched in low complexity; the sequence is DAPAAAPQQVASS.

The protein belongs to the TatA/E family. In terms of assembly, the Tat system comprises two distinct complexes: a TatABC complex, containing multiple copies of TatA, TatB and TatC subunits, and a separate TatA complex, containing only TatA subunits. Substrates initially bind to the TatABC complex, which probably triggers association of the separate TatA complex to form the active translocon.

The protein localises to the cell inner membrane. In terms of biological role, part of the twin-arginine translocation (Tat) system that transports large folded proteins containing a characteristic twin-arginine motif in their signal peptide across membranes. TatA could form the protein-conducting channel of the Tat system. The sequence is that of Sec-independent protein translocase protein TatA from Albidiferax ferrireducens (strain ATCC BAA-621 / DSM 15236 / T118) (Rhodoferax ferrireducens).